A 224-amino-acid chain; its full sequence is Putative tyrosine-protein phosphatase OCA6 (224 aa).

Threonine 2 carries the post-translational modification Phosphothreonine. A Tyrosine-protein phosphatase domain is found at 8–170 (QFSTVQPNLY…FNSEIEVDDL (163 aa)). Residue cysteine 114 is the Phosphocysteine intermediate of the active site.

Belongs to the protein-tyrosine phosphatase family.

It is found in the cytoplasm. The catalysed reaction is O-phospho-L-tyrosyl-[protein] + H2O = L-tyrosyl-[protein] + phosphate. Functionally, required for replication of Brome mosaic virus (BMV). This chain is Putative tyrosine-protein phosphatase OCA6 (OCA6), found in Saccharomyces cerevisiae (strain ATCC 204508 / S288c) (Baker's yeast).